The chain runs to 617 residues: V-type proton ATPase catalytic subunit A (617 aa).

Asp2 carries the N-acetylalanine modification. Thr136 bears the Phosphothreonine mark. An ATP-binding site is contributed by 250–257 (GAFGCGKT). Ser384 bears the Phosphoserine; by AMPK mark.

Belongs to the ATPase alpha/beta chains family. V-ATPase is a heteromultimeric enzyme made up of two complexes: the ATP-hydrolytic V1 complex and the proton translocation V0 complex. The V1 complex consists of three catalytic AB heterodimers that form a heterohexamer, three peripheral stalks each consisting of EG heterodimers, one central rotor including subunits D and F, and the regulatory subunits C and H. The proton translocation complex V0 consists of the proton transport subunit a, a ring of proteolipid subunits c9c'', rotary subunit d, subunits e and f, and the accessory subunits ATP6AP1/Ac45 and ATP6AP2/PRR. Interacts with the V0 complex V-ATPase subunit a4 ATP6V0A4. Interacts with WFS1. Interacts with alpha-crystallin B chain/CRYAB and with MTOR, forming a ternary complex. In terms of assembly, (Microbial infection) Interacts with Rabies virus protein M; this interaction promotes virion uncoating. In terms of processing, phosphorylation at Ser-384 by AMPK down-regulates its enzyme activity. High expression in the skin.

It localises to the cytoplasm. Its subcellular location is the cytosol. The protein resides in the cytoplasmic vesicle. It is found in the secretory vesicle. The protein localises to the clathrin-coated vesicle membrane. It localises to the lysosome. It catalyses the reaction ATP + H2O + 4 H(+)(in) = ADP + phosphate + 5 H(+)(out). With respect to regulation, ATP hydrolysis occurs at the interface between the nucleotide-binding domains of subunits A and B. ATP hydrolysis triggers a conformational change in the subunits D and F, which induces a shift of subunit d. The c-ring is subsequently rotated and results in a continuous proton translocation across the membrane. Catalytic subunit of the V1 complex of vacuolar(H+)-ATPase (V-ATPase), a multisubunit enzyme composed of a peripheral complex (V1) that hydrolyzes ATP and a membrane integral complex (V0) that translocates protons. V-ATPase is responsible for acidifying and maintaining the pH of intracellular compartments and in some cell types, is targeted to the plasma membrane, where it is responsible for acidifying the extracellular environment. In aerobic conditions, involved in intracellular iron homeostasis, thus triggering the activity of Fe(2+) prolyl hydroxylase (PHD) enzymes, and leading to HIF1A hydroxylation and subsequent proteasomal degradation. May play a role in neurite development and synaptic connectivity. Its function is as follows. (Microbial infection) Plays an important role in virion uncoating during Rabies virus replication after membrane fusion. Specifically, participates in the dissociation of incoming viral matrix M proteins uncoating through direct interaction. The chain is V-type proton ATPase catalytic subunit A (ATP6V1A) from Homo sapiens (Human).